Consider the following 288-residue polypeptide: Quinate/shikimate dehydrogenase (288 aa).

Residues Lys-71 and Asp-107 each contribute to the substrate site. NAD(+)-binding positions include 132–135 (AGGA), 155–158 (NRRD), Lys-205, 232–235 (CVYN), and Gly-255.

It belongs to the shikimate dehydrogenase family. Homodimer.

The catalysed reaction is L-quinate + NAD(+) = 3-dehydroquinate + NADH + H(+). It carries out the reaction L-quinate + NADP(+) = 3-dehydroquinate + NADPH + H(+). It catalyses the reaction shikimate + NADP(+) = 3-dehydroshikimate + NADPH + H(+). The enzyme catalyses shikimate + NAD(+) = 3-dehydroshikimate + NADH + H(+). Its pathway is metabolic intermediate biosynthesis; chorismate biosynthesis; chorismate from D-erythrose 4-phosphate and phosphoenolpyruvate: step 4/7. Its function is as follows. The actual biological function of YdiB remains unclear, nor is it known whether 3-dehydroshikimate or quinate represents the natural substrate. Catalyzes the reversible NAD-dependent reduction of both 3-dehydroshikimate (DHSA) and 3-dehydroquinate to yield shikimate (SA) and quinate, respectively. It can use both NAD or NADP for catalysis, however it has higher catalytic efficiency with NAD. The chain is Quinate/shikimate dehydrogenase from Shigella flexneri.